Reading from the N-terminus, the 263-residue chain is Endonuclease 8 (263 aa).

The Schiff-base intermediate with DNA role is filled by proline 2. Catalysis depends on glutamate 3, which acts as the Proton donor. The active-site Proton donor; for beta-elimination activity is the lysine 53. 3 residues coordinate DNA: glutamine 70, arginine 125, and asparagine 169. The segment at 229-263 (KVFHRDGELCERCGGIIEKTTLSSRPFYWCPGCQH) adopts an FPG-type zinc-finger fold. Arginine 253 (proton donor; for delta-elimination activity) is an active-site residue.

Belongs to the FPG family. It depends on Zn(2+) as a cofactor.

It carries out the reaction 2'-deoxyribonucleotide-(2'-deoxyribose 5'-phosphate)-2'-deoxyribonucleotide-DNA = a 3'-end 2'-deoxyribonucleotide-(2,3-dehydro-2,3-deoxyribose 5'-phosphate)-DNA + a 5'-end 5'-phospho-2'-deoxyribonucleoside-DNA + H(+). Functionally, involved in base excision repair of DNA damaged by oxidation or by mutagenic agents. Acts as a DNA glycosylase that recognizes and removes damaged bases. Has a preference for oxidized pyrimidines, such as thymine glycol, 5,6-dihydrouracil and 5,6-dihydrothymine. Has AP (apurinic/apyrimidinic) lyase activity and introduces nicks in the DNA strand. Cleaves the DNA backbone by beta-delta elimination to generate a single-strand break at the site of the removed base with both 3'- and 5'-phosphates. The chain is Endonuclease 8 from Shigella boydii serotype 4 (strain Sb227).